We begin with the raw amino-acid sequence, 480 residues long: Protein nucleotidyltransferase YdiU (480 aa).

ATP contacts are provided by Gly86, Gly88, Arg89, Lys109, Asp121, Gly122, Arg172, and Arg179. Catalysis depends on Asp248, which acts as the Proton acceptor. Residues Asn249 and Asp258 each contribute to the Mg(2+) site. Asp258 is an ATP binding site.

This sequence belongs to the SELO family. It depends on Mg(2+) as a cofactor. Mn(2+) is required as a cofactor.

It carries out the reaction L-seryl-[protein] + ATP = 3-O-(5'-adenylyl)-L-seryl-[protein] + diphosphate. It catalyses the reaction L-threonyl-[protein] + ATP = 3-O-(5'-adenylyl)-L-threonyl-[protein] + diphosphate. The catalysed reaction is L-tyrosyl-[protein] + ATP = O-(5'-adenylyl)-L-tyrosyl-[protein] + diphosphate. The enzyme catalyses L-histidyl-[protein] + UTP = N(tele)-(5'-uridylyl)-L-histidyl-[protein] + diphosphate. It carries out the reaction L-seryl-[protein] + UTP = O-(5'-uridylyl)-L-seryl-[protein] + diphosphate. It catalyses the reaction L-tyrosyl-[protein] + UTP = O-(5'-uridylyl)-L-tyrosyl-[protein] + diphosphate. Nucleotidyltransferase involved in the post-translational modification of proteins. It can catalyze the addition of adenosine monophosphate (AMP) or uridine monophosphate (UMP) to a protein, resulting in modifications known as AMPylation and UMPylation. The protein is Protein nucleotidyltransferase YdiU of Salmonella typhi.